The sequence spans 432 residues: Glutamate-1-semialdehyde 2,1-aminomutase (432 aa).

At lysine 267 the chain carries N6-(pyridoxal phosphate)lysine.

The protein belongs to the class-III pyridoxal-phosphate-dependent aminotransferase family. HemL subfamily. Homodimer. Requires pyridoxal 5'-phosphate as cofactor.

The protein resides in the cytoplasm. It carries out the reaction (S)-4-amino-5-oxopentanoate = 5-aminolevulinate. It participates in porphyrin-containing compound metabolism; protoporphyrin-IX biosynthesis; 5-aminolevulinate from L-glutamyl-tRNA(Glu): step 2/2. In Syntrophus aciditrophicus (strain SB), this protein is Glutamate-1-semialdehyde 2,1-aminomutase.